A 141-amino-acid polypeptide reads, in one-letter code: Nucleoside triphosphatase NudI (141 aa).

The Nudix hydrolase domain occupies 1–141 (MRQRTIVCPL…RHTLRLKGLL (141 aa)). The short motif at 38-59 (GGVEPGERIEEALRREIREELG) is the Nudix box element.

This sequence belongs to the Nudix hydrolase family. NudI subfamily. As to quaternary structure, monomer. Mg(2+) is required as a cofactor.

The catalysed reaction is a ribonucleoside 5'-triphosphate + H2O = a ribonucleoside 5'-phosphate + diphosphate + H(+). It carries out the reaction a 2'-deoxyribonucleoside 5'-triphosphate + H2O = a 2'-deoxyribonucleoside 5'-phosphate + diphosphate + H(+). It catalyses the reaction dUTP + H2O = dUMP + diphosphate + H(+). The enzyme catalyses dTTP + H2O = dTMP + diphosphate + H(+). The catalysed reaction is dCTP + H2O = dCMP + diphosphate + H(+). Functionally, catalyzes the hydrolysis of nucleoside triphosphates, with a preference for pyrimidine deoxynucleoside triphosphates (dUTP, dTTP and dCTP). This is Nucleoside triphosphatase NudI from Salmonella arizonae (strain ATCC BAA-731 / CDC346-86 / RSK2980).